The primary structure comprises 98 residues: Omega-hexatoxin-Hr2b (98 aa).

A signal peptide spans 1–22; the sequence is MKFSKLSLTLALILTQVLFVLC. The propeptide occupies 24 to 56; it reads KINEDFMKHGLESQALHDEIRKPIDSENPDTER. 3 disulfide bridges follow: Cys-60-Cys-74, Cys-67-Cys-80, and Cys-73-Cys-85. Leu-97 carries the post-translational modification Leucine amide.

Belongs to the neurotoxin 15 family. 02 (omega-actx) subfamily. In terms of tissue distribution, expressed by the venom gland.

The protein resides in the secreted. Its function is as follows. Potent inhibitor of insect, but not mammalian, voltage-gated calcium channels (Cav). The sequence is that of Omega-hexatoxin-Hr2b from Atrax robustus (Sydney funnel-web spider).